The chain runs to 440 residues: Transposon Ty1-OL Gag polyprotein (440 aa).

3 stretches are compositionally biased toward polar residues: residues 1–23 (MESQ…SVTS), 48–60 (TKAN…TPAS), and 127–152 (QSQF…GNTF). Disordered regions lie at residues 1 to 93 (MESQ…MMTQ), 126 to 173 (PQSQ…RPPP), and 352 to 440 (GSRN…PGTY). Low complexity predominate over residues 153–165 (TDSSSADSDMTST). The segment at 299 to 401 (NNGIHINNKV…NSKSKTARAH (103 aa)) is RNA-binding. A compositionally biased stretch (low complexity) spans 402–418 (NVSTSNNSPSTDNDSIS). A Phosphoserine modification is found at Ser-416. A compositionally biased stretch (polar residues) spans 419–428 (KSTTEPIQLN). A compositionally biased stretch (basic and acidic residues) spans 429–440 (NKHDLHLRPGTY).

In terms of assembly, homotrimer.

The protein resides in the cytoplasm. Its function is as follows. Capsid protein (CA) is the structural component of the virus-like particle (VLP), forming the shell that encapsulates the retrotransposons dimeric RNA genome. The particles are assembled from trimer-clustered units and there are holes in the capsid shells that allow for the diffusion of macromolecules. CA also has nucleocapsid-like chaperone activity, promoting primer tRNA(i)-Met annealing to the multipartite primer-binding site (PBS), dimerization of Ty1 RNA and initiation of reverse transcription. This is Transposon Ty1-OL Gag polyprotein (TY1A-OL) from Saccharomyces cerevisiae (strain ATCC 204508 / S288c) (Baker's yeast).